A 244-amino-acid chain; its full sequence is 5'-nucleotidase SurE 2 (244 aa).

A divalent metal cation contacts are provided by aspartate 8, aspartate 9, serine 39, and asparagine 96.

Belongs to the SurE nucleotidase family. A divalent metal cation is required as a cofactor.

Its subcellular location is the cytoplasm. The catalysed reaction is a ribonucleoside 5'-phosphate + H2O = a ribonucleoside + phosphate. Nucleotidase that shows phosphatase activity on nucleoside 5'-monophosphates. This chain is 5'-nucleotidase SurE 2, found in Thermus thermophilus (strain ATCC BAA-163 / DSM 7039 / HB27).